Consider the following 413-residue polypeptide: 1-deoxy-D-xylulose 5-phosphate reductoisomerase (413 aa).

Residues Thr13, Gly14, Ser15, Ile16, Lys40, Asn41, and Asn127 each contribute to the NADPH site. Lys128 lines the 1-deoxy-D-xylulose 5-phosphate pocket. Glu129 contacts NADPH. Mn(2+) is bound at residue Asp153. 1-deoxy-D-xylulose 5-phosphate is bound by residues Ser154, Glu155, Ser184, and His207. Residue Glu155 participates in Mn(2+) binding. Gly213 contributes to the NADPH binding site. 1-deoxy-D-xylulose 5-phosphate-binding residues include Ser220, Asn225, Lys226, and Glu229. Mn(2+) is bound at residue Glu229.

This sequence belongs to the DXR family. Mg(2+) is required as a cofactor. Requires Mn(2+) as cofactor.

The enzyme catalyses 2-C-methyl-D-erythritol 4-phosphate + NADP(+) = 1-deoxy-D-xylulose 5-phosphate + NADPH + H(+). It functions in the pathway isoprenoid biosynthesis; isopentenyl diphosphate biosynthesis via DXP pathway; isopentenyl diphosphate from 1-deoxy-D-xylulose 5-phosphate: step 1/6. Its function is as follows. Catalyzes the NADPH-dependent rearrangement and reduction of 1-deoxy-D-xylulose-5-phosphate (DXP) to 2-C-methyl-D-erythritol 4-phosphate (MEP). In Nitrosomonas eutropha (strain DSM 101675 / C91 / Nm57), this protein is 1-deoxy-D-xylulose 5-phosphate reductoisomerase.